Reading from the N-terminus, the 288-residue chain is Glutamate racemase (288 aa).

The tract at residues 1 to 21 (MAIARQDVNISSPEATTSDAQ) is disordered. Residues 8-21 (VNISSPEATTSDAQ) are compositionally biased toward polar residues. Substrate-binding positions include 32–33 (DS) and 64–65 (YG). The active-site Proton donor/acceptor is Cys96. Residue 97–98 (NT) coordinates substrate. The active-site Proton donor/acceptor is Cys209. 210–211 (TH) provides a ligand contact to substrate.

This sequence belongs to the aspartate/glutamate racemases family.

The enzyme catalyses L-glutamate = D-glutamate. It participates in cell wall biogenesis; peptidoglycan biosynthesis. Provides the (R)-glutamate required for cell wall biosynthesis. In Proteus mirabilis (strain HI4320), this protein is Glutamate racemase.